A 371-amino-acid polypeptide reads, in one-letter code: dTDP-4-amino-4,6-dideoxy-D-glucose transaminase (371 aa).

Lys186 carries the N6-(pyridoxal phosphate)lysine modification.

Belongs to the DegT/DnrJ/EryC1 family. Pyridoxal 5'-phosphate is required as a cofactor.

The catalysed reaction is dTDP-4-amino-4,6-dideoxy-D-glucose + 2-oxoglutarate = dTDP-4-dehydro-6-deoxy-alpha-D-glucose + L-glutamate. The protein operates within bacterial outer membrane biogenesis; lipopolysaccharide biosynthesis. In terms of biological role, catalyzes the conversion of dTDP-4-dehydro-6-deoxy-D-glucose (dTDP-D-Glc4O) to dTDP-4-amino-4,6-dideoxy-D-glucose (dTDP-D-Qui4N). In Escherichia coli, this protein is dTDP-4-amino-4,6-dideoxy-D-glucose transaminase (vioA).